Reading from the N-terminus, the 179-residue chain is Replication restart protein DnaT (179 aa).

Residues 156 to 179 (GGLPKRDVNTVSEPDSQIPPGFRG) form a disordered region.

It belongs to the DnaT family. In terms of assembly, homooligomerizes. Interacts with PriB. Component of the replication restart primosome. Primosome assembly occurs via a 'hand-off' mechanism. PriA binds to replication forks, subsequently PriB then DnaT bind; DnaT then displaces ssDNA to generate the helicase loading substrate.

Involved in the restart of stalled replication forks, which reloads the replicative helicase on sites other than the origin of replication. Can function in multiple replication restart pathways. Displaces ssDNA from a PriB-ssDNA complex. Probably forms a spiral filament on ssDNA. The polypeptide is Replication restart protein DnaT (Escherichia coli O7:K1 (strain IAI39 / ExPEC)).